The following is a 207-amino-acid chain: Large ribosomal subunit protein uL18 (207 aa).

Belongs to the universal ribosomal protein uL18 family. As to quaternary structure, part of the 50S ribosomal subunit. Contacts the 5S and 23S rRNAs.

Functionally, this is one of the proteins that bind and probably mediate the attachment of the 5S RNA into the large ribosomal subunit, where it forms part of the central protuberance. The protein is Large ribosomal subunit protein uL18 of Caldivirga maquilingensis (strain ATCC 700844 / DSM 13496 / JCM 10307 / IC-167).